Consider the following 277-residue polypeptide: Glycerol-3-phosphate acyltransferase (277 aa).

A run of 5 helical transmembrane segments spans residues 3–23, 55–75, 79–99, 111–131, and 155–175; these read LFIF…AIIV, IMVM…AKFL, PVTV…PVFF, IGAL…TWLL, and LILV…ILVL. Residues 207–277 form a disordered region; sequence SPATSAEQEF…PKTKTVKEKE (71 aa). Residues 216-239 show a composition bias toward basic and acidic residues; the sequence is FPGKEVIDTNIDETEKTEQAEAVK. 2 stretches are compositionally biased toward basic residues: residues 240–253 and 262–271; these read KPKV…AKKT and KPKSTKPKTK.

Belongs to the PlsY family. In terms of assembly, probably interacts with PlsX.

It localises to the cell inner membrane. The catalysed reaction is an acyl phosphate + sn-glycerol 3-phosphate = a 1-acyl-sn-glycero-3-phosphate + phosphate. It functions in the pathway lipid metabolism; phospholipid metabolism. Catalyzes the transfer of an acyl group from acyl-phosphate (acyl-PO(4)) to glycerol-3-phosphate (G3P) to form lysophosphatidic acid (LPA). This enzyme utilizes acyl-phosphate as fatty acyl donor, but not acyl-CoA or acyl-ACP. The sequence is that of Glycerol-3-phosphate acyltransferase from Legionella pneumophila subsp. pneumophila (strain Philadelphia 1 / ATCC 33152 / DSM 7513).